The chain runs to 453 residues: Homeobox protein meis3 (453 aa).

Residues 33-64 (HHSLSQSAPYGSTGAAHRVPMPPGMGSNDGLK) form a disordered region. The 84-residue stretch at 102 to 185 (GGDVCSSDSF…PIDLVIDDRD (84 aa)) folds into the MEIS N-terminal domain. Residues 192-272 (LEDFTGSCTS…RDKKRNKKRG (81 aa)) form a disordered region. Over residues 197-209 (GSCTSLSDQNNSW) the composition is skewed to polar residues. Residues 218 to 230 (STHSGTPGPSSGG) show a composition bias toward low complexity. Polar residues predominate over residues 231–242 (LASQSGDNSSEQ). The segment at residues 267 to 329 (RNKKRGIFPK…NARRRIVQPM (63 aa)) is a DNA-binding region (homeobox).

It belongs to the TALE/MEIS homeobox family.

The protein localises to the nucleus. Functionally, a caudalizing protein which is required to pattern the anterior/posterior (A/P) axis during central nervous system (CNS) formation. Inhibits anterior neural expression and acts as a transcriptional activator to induce posterior neural gene expression. Maintains a proper A/P balance required for hindbrain formation by activating the FGF/MAPK pathway, which modulates the planar cell polarity (PCP) pathway. Interacts with retinoid signaling during hindbrain patterning. This chain is Homeobox protein meis3, found in Xenopus tropicalis (Western clawed frog).